We begin with the raw amino-acid sequence, 208 residues long: Imidazoleglycerol-phosphate dehydratase (208 aa).

The disordered stretch occupies residues 1-22 (MTRRAAVKAPRAGAAARRGSVA). The span at 7–19 (VKAPRAGAAARRG) shows a compositional bias: low complexity.

It belongs to the imidazoleglycerol-phosphate dehydratase family.

Its subcellular location is the cytoplasm. It carries out the reaction D-erythro-1-(imidazol-4-yl)glycerol 3-phosphate = 3-(imidazol-4-yl)-2-oxopropyl phosphate + H2O. Its pathway is amino-acid biosynthesis; L-histidine biosynthesis; L-histidine from 5-phospho-alpha-D-ribose 1-diphosphate: step 6/9. The chain is Imidazoleglycerol-phosphate dehydratase from Anaeromyxobacter dehalogenans (strain 2CP-C).